The following is a 141-amino-acid chain: Hemoglobin subunit alpha (141 aa).

The 141-residue stretch at 1–141 (VLSPADKTNL…VSTVLTSKYR (141 aa)) folds into the Globin domain. At Ser3 the chain carries Phosphoserine. At Lys7 the chain carries N6-succinyllysine. A Phosphothreonine modification is found at Thr8. At Lys11 the chain carries N6-succinyllysine. An N6-acetyllysine; alternate modification is found at Lys16. Lys16 is subject to N6-succinyllysine; alternate. Tyr24 carries the post-translational modification Phosphotyrosine. The residue at position 40 (Lys40) is an N6-succinyllysine. At Ser49 the chain carries Phosphoserine. His58 is a binding site for O2. His87 is a binding site for heme b. Ser102 bears the Phosphoserine mark. At Thr108 the chain carries Phosphothreonine. The residue at position 124 (Ser124) is a Phosphoserine. Phosphothreonine occurs at positions 134 and 137. A Phosphoserine modification is found at Ser138.

It belongs to the globin family. As to quaternary structure, heterotetramer of two alpha chains and two beta chains. As to expression, red blood cells.

Involved in oxygen transport from the lung to the various peripheral tissues. This Tamias striatus (Eastern chipmunk) protein is Hemoglobin subunit alpha.